Here is a 143-residue protein sequence, read N- to C-terminus: uncharacterized protein (143 aa).

The chain crosses the membrane as a helical span at residues 65–85; the sequence is LVWMLVGTIVLSLDIIFPALV.

The protein resides in the membrane. This is an uncharacterized protein from Saccharomyces cerevisiae (strain ATCC 204508 / S288c) (Baker's yeast).